A 116-amino-acid chain; its full sequence is Iron-sulfur cluster insertion protein ErpA (116 aa).

Iron-sulfur cluster contacts are provided by cysteine 44, cysteine 108, and cysteine 110.

This sequence belongs to the HesB/IscA family. In terms of assembly, homodimer. The cofactor is iron-sulfur cluster.

Its function is as follows. Required for insertion of 4Fe-4S clusters for at least IspG. In Pseudomonas syringae pv. syringae (strain B728a), this protein is Iron-sulfur cluster insertion protein ErpA.